Here is a 317-residue protein sequence, read N- to C-terminus: Melanocyte-stimulating hormone receptor (317 aa).

Over 1–37 the chain is Extracellular; sequence MPVLGSQRRLLGSLNCTPPATLPLTLAPNRTGPQCLE. Asn-29 carries N-linked (GlcNAc...) asparagine glycosylation. The helical transmembrane segment at 38–63 threads the bilayer; sequence VSIPDGLFLSLGLVSLVENVLVVAAI. Residues 64–72 lie on the Cytoplasmic side of the membrane; that stretch reads AKNRNLHSP. Residues 73-93 traverse the membrane as a helical segment; the sequence is MYYFICCLAMSDLLVSVSNVL. The Extracellular portion of the chain corresponds to 94–118; that stretch reads ETAVMLLLEAGVLATRAAVVQQLDN. Residues 119 to 140 traverse the membrane as a helical segment; the sequence is VIDVLICSSMVSSLCFLGAIAV. Topologically, residues 141–163 are cytoplasmic; that stretch reads DRYISIFYALRYHSVVTLPRAWR. The chain crosses the membrane as a helical span at residues 164–183; that stretch reads IIAAIWVASILTSVLSITYY. Over 184-191 the chain is Extracellular; it reads NHTVVLLC. Residues 192–211 form a helical membrane-spanning segment; the sequence is LVGFFIAMLALMAVLYVHML. At 212–240 the chain is on the cytoplasmic side; it reads ARACQHARGIARLQKRQRPIHQGFGLKGA. Residues 241–266 traverse the membrane as a helical segment; sequence ATLTILLGVFFLCWGPFFLHLSLIVL. At 267-279 the chain is on the extracellular side; it reads CPQHPTCGCIFKN. A helical transmembrane segment spans residues 280–300; that stretch reads FNLFLALIICNAIVDPLIYAF. Over 301–317 the chain is Cytoplasmic; the sequence is RSQELRKTLQEVLQCSW. The S-palmitoyl cysteine moiety is linked to residue Cys-315.

This sequence belongs to the G-protein coupled receptor 1 family. As to quaternary structure, interacts with MGRN1, but does not undergo MGRN1-mediated ubiquitination; this interaction competes with GNAS-binding and thus inhibits agonist-induced cAMP production. Interacts with OPN3; the interaction results in a decrease in MC1R-mediated cAMP signaling and ultimately a decrease in melanin production in melanocytes.

It is found in the cell membrane. Receptor for MSH (alpha, beta and gamma) and ACTH. The activity of this receptor is mediated by G proteins which activate adenylate cyclase. Mediates melanogenesis, the production of eumelanin (black/brown) and phaeomelanin (red/yellow), via regulation of cAMP signaling in melanocytes. The polypeptide is Melanocyte-stimulating hormone receptor (MC1R) (Ovis aries (Sheep)).